The primary structure comprises 346 residues: Iron uptake protein A2 (346 aa).

Residues 1–31 constitute a signal peptide (tat-type signal); it reads MTTKISRRTFFVGGTALTALVVANLPRRASA. Fe cation-binding residues include His-43, Tyr-44, Tyr-169, Tyr-225, and Tyr-226.

Belongs to the bacterial solute-binding protein 1 family. Post-translationally, predicted to be exported by the Tat system. The position of the signal peptide cleavage has not been experimentally proven.

It is found in the cellular thylakoid membrane. Its subcellular location is the periplasm. Its function is as follows. Probably part of a periplasmic ABC transporter complex futA1A2BC (TC 3.A.1.10.2) involved in Fe(3+) ion import (ferric iron). This protein and futA1 (slr1295) are subunit proteins that have redundant or overlapping substrate-binding functions. The differing subcellular locations of futA1 (predominantly thylakoid lumen) and futA2 (predominantly periplasmic) suggest they may fulfill different roles. Functionally, plays an important role in protecting the acceptor side of photosystem II (PSII) against oxidative damage, especially under iron-limiting growth conditions. Plays an undefined role in copper supply to thylakoid proteins. The chain is Iron uptake protein A2 (futA2) from Synechocystis sp. (strain ATCC 27184 / PCC 6803 / Kazusa).